Reading from the N-terminus, the 1023-residue chain is 2-oxoglutarate dehydrogenase complex component E1 (1023 aa).

Residues methionine 1–tyrosine 40 constitute a mitochondrion transit peptide. At lysine 74 the chain carries N6-succinyllysine. Phosphoserine is present on serine 100. Histidine 143, aspartate 156, and aspartate 158 together coordinate Ca(2+). Residue arginine 312 participates in thiamine diphosphate binding. Lysine 401 carries the post-translational modification N6-acetyllysine. Residues aspartate 411, asparagine 444, and isoleucine 446 each coordinate thiamine diphosphate. Residues aspartate 411, asparagine 444, and isoleucine 446 each coordinate Mg(2+). Residue lysine 534 forms a Glycyl lysine isopeptide (Lys-Gly) (interchain with G-Cter in ubiquitin) linkage. At lysine 564 the chain carries N6-succinyllysine. Glutamine 676 provides a ligand contact to thiamine diphosphate. Lysine 970 is subject to N6-acetyllysine.

It belongs to the alpha-ketoglutarate dehydrogenase family. As to quaternary structure, homodimer. The 2-oxoglutarate dehydrogenase complex is composed of OGDH (2-oxoglutarate dehydrogenase; E1), DLST (dihydrolipoamide succinyltransferase; E2), DLD (dihydrolipoamide dehydrogenase; E3) and the assembly factor KGD4. It contains multiple copies of the three enzymatic components (E1, E2 and E3). In the nucleus, the 2-oxoglutarate dehydrogenase complex associates with KAT2A. Interacts with ABHD11; this interaction maintains the functional lipoylation of the 2-oxoglutarate dehydrogenase complex. It depends on thiamine diphosphate as a cofactor. The cofactor is Mg(2+).

The protein localises to the mitochondrion. It is found in the nucleus. The enzyme catalyses N(6)-[(R)-lipoyl]-L-lysyl-[protein] + 2-oxoglutarate + H(+) = N(6)-[(R)-S(8)-succinyldihydrolipoyl]-L-lysyl-[protein] + CO2. Its activity is regulated as follows. Calcium ions and ADP stimulate, whereas ATP and NADH reduce catalytic activity. In terms of biological role, 2-oxoglutarate dehydrogenase (E1o) component of the 2-oxoglutarate dehydrogenase complex (OGDHC). Participates in the first step, rate limiting for the overall conversion of 2-oxoglutarate to succinyl-CoA and CO(2) catalyzed by the whole OGDHC. Catalyzes the irreversible decarboxylation of 2-oxoglutarate (alpha-ketoglutarate) via the thiamine diphosphate (ThDP) cofactor and subsequent transfer of the decarboxylated acyl intermediate on an oxidized dihydrolipoyl group that is covalently amidated to the E2 enzyme (dihydrolipoyllysine-residue succinyltransferase or DLST). Plays a key role in the Krebs (citric acid) cycle, which is a common pathway for oxidation of fuel molecules, including carbohydrates, fatty acids, and amino acids. Can catalyze the decarboxylation of 2-oxoadipate in vitro, but at a much lower rate than 2-oxoglutarate. Mainly active in the mitochondrion. A fraction of the 2-oxoglutarate dehydrogenase complex also localizes in the nucleus and is required for lysine succinylation of histones: associates with KAT2A on chromatin and provides succinyl-CoA to histone succinyltransferase KAT2A. In Bos taurus (Bovine), this protein is 2-oxoglutarate dehydrogenase complex component E1.